We begin with the raw amino-acid sequence, 422 residues long: Killer cell immunoglobulin-like receptor 3DL1 (422 aa).

A signal peptide spans 1–21 (MMFEFLSLLCSGFFLVQRMSA). At 22–329 (HMGSYDKPFL…KNLHIQIGLL (308 aa)) the chain is on the extracellular side. 3 consecutive Ig-like C2-type domains span residues 42–100 (GQNV…HHQY), 135–202 (GENV…YNHS), and 237–300 (EQNM…FKNS). An N-linked (GlcNAc...) asparagine glycan is attached at Asn44. A disulfide bond links Cys49 and Cys95. Asn137 carries an N-linked (GlcNAc...) asparagine glycan. Cys142 and Cys195 are joined by a disulfide. Asn200 and Asn239 each carry an N-linked (GlcNAc...) asparagine glycan. Cys244 and Cys293 are disulfide-bonded. N-linked (GlcNAc...) asparagine glycosylation is present at Asn299. The chain crosses the membrane as a helical span at residues 330–350 (VTMVLVIVVIIIIIIIIIIII). The Cytoplasmic segment spans residues 351 to 422 (YYYYFSKKSS…DTVVYTEVMI (72 aa)).

It belongs to the immunoglobulin superfamily.

Its subcellular location is the cell membrane. Its function is as follows. Receptor on natural killer (NK) cells. Inhibits the activity of NK cells thus preventing cell lysis. The chain is Killer cell immunoglobulin-like receptor 3DL1 (Kir3dl1) from Rattus norvegicus (Rat).